Consider the following 427-residue polypeptide: Trigger factor (427 aa).

In terms of domain architecture, PPIase FKBP-type spans 163 to 248 (GDTVVIDFVG…IHEVKAKEVP (86 aa)).

The protein belongs to the FKBP-type PPIase family. Tig subfamily.

It is found in the cytoplasm. It catalyses the reaction [protein]-peptidylproline (omega=180) = [protein]-peptidylproline (omega=0). Functionally, involved in protein export. Acts as a chaperone by maintaining the newly synthesized protein in an open conformation. Functions as a peptidyl-prolyl cis-trans isomerase. The sequence is that of Trigger factor from Streptococcus pneumoniae (strain CGSP14).